Here is a 432-residue protein sequence, read N- to C-terminus: Adenylosuccinate synthetase (432 aa).

GTP contacts are provided by residues 13–19 (GDEGKGK) and 41–43 (GHT). Asp-14 acts as the Proton acceptor in catalysis. The Mg(2+) site is built by Asp-14 and Gly-41. Residues 14-17 (DEGK), 39-42 (NAGH), Thr-130, Arg-144, Gln-225, Thr-240, and Arg-304 each bind IMP. Residue His-42 is the Proton donor of the active site. 300–306 (AVTGRPR) lines the substrate pocket. Residues Arg-306, 332–334 (KLD), and 415–417 (STG) contribute to the GTP site.

The protein belongs to the adenylosuccinate synthetase family. As to quaternary structure, homodimer. It depends on Mg(2+) as a cofactor.

The protein resides in the cytoplasm. The enzyme catalyses IMP + L-aspartate + GTP = N(6)-(1,2-dicarboxyethyl)-AMP + GDP + phosphate + 2 H(+). The protein operates within purine metabolism; AMP biosynthesis via de novo pathway; AMP from IMP: step 1/2. Functionally, plays an important role in the de novo pathway of purine nucleotide biosynthesis. Catalyzes the first committed step in the biosynthesis of AMP from IMP. This is Adenylosuccinate synthetase from Actinobacillus pleuropneumoniae serotype 5b (strain L20).